Reading from the N-terminus, the 932-residue chain is Protein translocase subunit SecA (932 aa).

Residues Q87, 105-109, and D515 contribute to the ATP site; that span reads GEGKT. The Zn(2+) site is built by C916, C918, C927, and H928.

The protein belongs to the SecA family. In terms of assembly, monomer and homodimer. Part of the essential Sec protein translocation apparatus which comprises SecA, SecYEG and auxiliary proteins SecDF-YajC and YidC. The cofactor is Zn(2+).

It localises to the cell inner membrane. Its subcellular location is the cytoplasm. The enzyme catalyses ATP + H2O + cellular proteinSide 1 = ADP + phosphate + cellular proteinSide 2.. Its function is as follows. Part of the Sec protein translocase complex. Interacts with the SecYEG preprotein conducting channel. Has a central role in coupling the hydrolysis of ATP to the transfer of proteins into and across the cell membrane, serving both as a receptor for the preprotein-SecB complex and as an ATP-driven molecular motor driving the stepwise translocation of polypeptide chains across the membrane. This Burkholderia orbicola (strain MC0-3) protein is Protein translocase subunit SecA.